Consider the following 280-residue polypeptide: Pantothenate synthetase (280 aa).

31-38 contributes to the ATP binding site; it reads MGNLHAGH. The active-site Proton donor is His-38. Gln-62 serves as a coordination point for (R)-pantoate. Gln-62 serves as a coordination point for beta-alanine. 150 to 153 provides a ligand contact to ATP; sequence GKKD. Gln-156 contacts (R)-pantoate. ATP is bound by residues Val-179 and 187-190; that span reads MSSR.

The protein belongs to the pantothenate synthetase family. In terms of assembly, homodimer.

Its subcellular location is the cytoplasm. The catalysed reaction is (R)-pantoate + beta-alanine + ATP = (R)-pantothenate + AMP + diphosphate + H(+). The protein operates within cofactor biosynthesis; (R)-pantothenate biosynthesis; (R)-pantothenate from (R)-pantoate and beta-alanine: step 1/1. Catalyzes the condensation of pantoate with beta-alanine in an ATP-dependent reaction via a pantoyl-adenylate intermediate. This Xanthomonas axonopodis pv. citri (strain 306) protein is Pantothenate synthetase.